The sequence spans 487 residues: Glutamyl-tRNA(Gln) amidotransferase subunit A (487 aa).

Residues Lys79 and Ser158 each act as charge relay system in the active site. Ser182 serves as the catalytic Acyl-ester intermediate.

Belongs to the amidase family. GatA subfamily. In terms of assembly, heterotrimer of A, B and C subunits.

The catalysed reaction is L-glutamyl-tRNA(Gln) + L-glutamine + ATP + H2O = L-glutaminyl-tRNA(Gln) + L-glutamate + ADP + phosphate + H(+). Its function is as follows. Allows the formation of correctly charged Gln-tRNA(Gln) through the transamidation of misacylated Glu-tRNA(Gln) in organisms which lack glutaminyl-tRNA synthetase. The reaction takes place in the presence of glutamine and ATP through an activated gamma-phospho-Glu-tRNA(Gln). In Ehrlichia chaffeensis (strain ATCC CRL-10679 / Arkansas), this protein is Glutamyl-tRNA(Gln) amidotransferase subunit A.